Consider the following 354-residue polypeptide: Glyceraldehyde-3-phosphate dehydrogenase (354 aa).

Residues 11–12 (TI) and Gly108 contribute to the NAD(+) site. 137-139 (SCN) serves as a coordination point for D-glyceraldehyde 3-phosphate. Cys138 (nucleophile) is an active-site residue. Position 166 (Arg166) interacts with NAD(+). 192–193 (HG) lines the D-glyceraldehyde 3-phosphate pocket. Gln299 contributes to the NAD(+) binding site.

It belongs to the glyceraldehyde-3-phosphate dehydrogenase family. As to quaternary structure, homotetramer.

The protein localises to the cytoplasm. The enzyme catalyses D-glyceraldehyde 3-phosphate + phosphate + NADP(+) = (2R)-3-phospho-glyceroyl phosphate + NADPH + H(+). The catalysed reaction is D-glyceraldehyde 3-phosphate + phosphate + NAD(+) = (2R)-3-phospho-glyceroyl phosphate + NADH + H(+). It functions in the pathway carbohydrate degradation; glycolysis; pyruvate from D-glyceraldehyde 3-phosphate: step 1/5. The chain is Glyceraldehyde-3-phosphate dehydrogenase from Haloarcula marismortui (strain ATCC 43049 / DSM 3752 / JCM 8966 / VKM B-1809) (Halobacterium marismortui).